Reading from the N-terminus, the 158-residue chain is Small ribosomal subunit protein uS9 (158 aa).

Over residues 1-10 (MSDTMQSLDQ) the composition is skewed to polar residues. Residues 1-35 (MSDTMQSLDQLSALKTAAPDAPKREKKVDKQGRAY) are disordered. Basic and acidic residues predominate over residues 21 to 32 (APKREKKVDKQG).

The protein belongs to the universal ribosomal protein uS9 family.

The chain is Small ribosomal subunit protein uS9 from Afipia carboxidovorans (strain ATCC 49405 / DSM 1227 / KCTC 32145 / OM5) (Oligotropha carboxidovorans).